Reading from the N-terminus, the 257-residue chain is Imidazole glycerol phosphate synthase subunit HisF (257 aa).

Active-site residues include Asp12 and Asp131.

This sequence belongs to the HisA/HisF family. As to quaternary structure, heterodimer of HisH and HisF.

The protein localises to the cytoplasm. The catalysed reaction is 5-[(5-phospho-1-deoxy-D-ribulos-1-ylimino)methylamino]-1-(5-phospho-beta-D-ribosyl)imidazole-4-carboxamide + L-glutamine = D-erythro-1-(imidazol-4-yl)glycerol 3-phosphate + 5-amino-1-(5-phospho-beta-D-ribosyl)imidazole-4-carboxamide + L-glutamate + H(+). Its pathway is amino-acid biosynthesis; L-histidine biosynthesis; L-histidine from 5-phospho-alpha-D-ribose 1-diphosphate: step 5/9. IGPS catalyzes the conversion of PRFAR and glutamine to IGP, AICAR and glutamate. The HisF subunit catalyzes the cyclization activity that produces IGP and AICAR from PRFAR using the ammonia provided by the HisH subunit. This chain is Imidazole glycerol phosphate synthase subunit HisF, found in Rhodococcus opacus (strain B4).